The primary structure comprises 257 residues: Imidazole glycerol phosphate synthase subunit HisF (257 aa).

Active-site residues include D11 and D130.

Belongs to the HisA/HisF family. Heterodimer of HisH and HisF.

It localises to the cytoplasm. The catalysed reaction is 5-[(5-phospho-1-deoxy-D-ribulos-1-ylimino)methylamino]-1-(5-phospho-beta-D-ribosyl)imidazole-4-carboxamide + L-glutamine = D-erythro-1-(imidazol-4-yl)glycerol 3-phosphate + 5-amino-1-(5-phospho-beta-D-ribosyl)imidazole-4-carboxamide + L-glutamate + H(+). It participates in amino-acid biosynthesis; L-histidine biosynthesis; L-histidine from 5-phospho-alpha-D-ribose 1-diphosphate: step 5/9. IGPS catalyzes the conversion of PRFAR and glutamine to IGP, AICAR and glutamate. The HisF subunit catalyzes the cyclization activity that produces IGP and AICAR from PRFAR using the ammonia provided by the HisH subunit. The sequence is that of Imidazole glycerol phosphate synthase subunit HisF from Shewanella sp. (strain W3-18-1).